The following is a 95-amino-acid chain: uncharacterized protein (95 aa).

Residues 60 to 89 are a coiled coil; the sequence is VKNMINRIVEELDKRIDEIKEGLNELEKSG.

This is an uncharacterized protein from Sulfolobus islandicus filamentous virus (isolate Iceland/Hveragerdi) (SIFV).